Here is an 85-residue protein sequence, read N- to C-terminus: Small ribosomal subunit protein uS17 (85 aa).

This sequence belongs to the universal ribosomal protein uS17 family. Part of the 30S ribosomal subunit.

In terms of biological role, one of the primary rRNA binding proteins, it binds specifically to the 5'-end of 16S ribosomal RNA. The polypeptide is Small ribosomal subunit protein uS17 (Blochmanniella floridana).